Consider the following 99-residue polypeptide: Small ribosomal subunit protein bS20 (99 aa).

The protein belongs to the bacterial ribosomal protein bS20 family.

Its function is as follows. Binds directly to 16S ribosomal RNA. In Synechococcus sp. (strain CC9311), this protein is Small ribosomal subunit protein bS20.